A 72-amino-acid polypeptide reads, in one-letter code: MANYYRKRVSPIKPGDPIDYKDVELLKKYITERGKIMPRRITGLTSKQQRDLTKSIKRARLVALLPYVNKES.

This sequence belongs to the bacterial ribosomal protein bS18 family. As to quaternary structure, part of the 30S ribosomal subunit. Forms a tight heterodimer with protein bS6.

Binds as a heterodimer with protein bS6 to the central domain of the 16S rRNA, where it helps stabilize the platform of the 30S subunit. This chain is Small ribosomal subunit protein bS18, found in Trichodesmium erythraeum (strain IMS101).